The chain runs to 335 residues: Mesoderm-specific transcript homolog protein (335 aa).

3 helical membrane passes run 13 to 33 (WWVQVGLLAVPLLAAYLHIPP), 88 to 108 (IWEGLTLSFHRVIALDFLGFG), and 266 to 286 (VGALASVSIPIHFIYGPLDPV). Residues 71–310 (IVVLLHGFPT…PRSTVSILDD (240 aa)) enclose the AB hydrolase-1 domain. The RVIALD signature appears at 98 to 103 (RVIALD).

This sequence belongs to the AB hydrolase superfamily. As to expression, no detectable transcripts during preimplantation development. Isoform 1 was not detected in either in vitro-matured oocytes (IVF) or parthenogenetically activated (PA) blastocyst. Isoform 2 was expressed in IVF and PA blastocysts.

It localises to the endoplasmic reticulum membrane. The sequence is that of Mesoderm-specific transcript homolog protein (MEST) from Bos taurus (Bovine).